A 286-amino-acid polypeptide reads, in one-letter code: Myb family transcription factor PHL7 (286 aa).

The region spanning 12–72 (HASKQRLRWT…HLQKYRLAKY (61 aa)) is the HTH myb-type domain. A DNA-binding region (H-T-H motif) is located at residues 43-68 (PKGVLRVMGVQGLTIYHVKSHLQKYR). The segment at 74 to 97 (PDSSSEGKKTDKKESGDMLSGLDG) is disordered. Residues 78–89 (SEGKKTDKKESG) show a composition bias toward basic and acidic residues. Positions 104–124 (TEALKLQMEVQKRLHEQLEVQ) form a coiled coil. Positions 117–122 (LHEQLE) match the LHEQLE motif. Residues 152-227 (LGEPSAPVTG…TGEERLSKKP (76 aa)) are disordered.

This sequence belongs to the MYB-CC family.

The protein localises to the nucleus. The sequence is that of Myb family transcription factor PHL7 from Arabidopsis thaliana (Mouse-ear cress).